A 180-amino-acid polypeptide reads, in one-letter code: Ribosome rescue factor SmrB (180 aa).

The 76-residue stretch at 98–173 (LDLHGLTQLQ…GNAALLVLVA (76 aa)) folds into the Smr domain.

The protein belongs to the SmrB family. In terms of assembly, associates with collided ribosomes, but not with correctly translating polysomes.

Acts as a ribosome collision sensor. Detects stalled/collided disomes (pairs of ribosomes where the leading ribosome is stalled and a second ribosome has collided with it) and endonucleolytically cleaves mRNA at the 5' boundary of the stalled ribosome. Stalled/collided disomes form a new interface (primarily via the 30S subunits) that binds SmrB. Cleaved mRNA becomes available for tmRNA ligation, leading to ribosomal subunit dissociation and rescue of stalled ribosomes. In Pectobacterium atrosepticum (strain SCRI 1043 / ATCC BAA-672) (Erwinia carotovora subsp. atroseptica), this protein is Ribosome rescue factor SmrB.